The primary structure comprises 255 residues: NAD-dependent protein deacylase (255 aa).

Residues 1–253 enclose the Deacetylase sirtuin-type domain; it reads MIEEAPRIIA…VKVKRCLENK (253 aa). 20 to 39 serves as a coordination point for NAD(+); sequence GAGVSAESGIPTFRDRGGLW. Substrate contacts are provided by Tyr64 and Arg67. 98–101 provides a ligand contact to NAD(+); that stretch reads QNID. Residue His116 is the Proton acceptor of the active site. Zn(2+) contacts are provided by Cys124, Cys127, Cys151, and Cys154. NAD(+) is bound by residues 191–193, 217–219, and Ala235; these read GTS and NTK.

The protein belongs to the sirtuin family. Class III subfamily. Zn(2+) is required as a cofactor.

The protein resides in the cytoplasm. It catalyses the reaction N(6)-acetyl-L-lysyl-[protein] + NAD(+) + H2O = 2''-O-acetyl-ADP-D-ribose + nicotinamide + L-lysyl-[protein]. It carries out the reaction N(6)-succinyl-L-lysyl-[protein] + NAD(+) + H2O = 2''-O-succinyl-ADP-D-ribose + nicotinamide + L-lysyl-[protein]. Its function is as follows. NAD-dependent lysine deacetylase and desuccinylase that specifically removes acetyl and succinyl groups on target proteins. Modulates the activities of several proteins which are inactive in their acylated form. Deacetylates the N-terminal lysine residue of Alba, the major archaeal chromatin protein and that, in turn, increases Alba's DNA binding affinity, thereby repressing transcription. In Thermococcus sibiricus (strain DSM 12597 / MM 739), this protein is NAD-dependent protein deacylase.